Reading from the N-terminus, the 130-residue chain is Fluoride-specific ion channel FluC (130 aa).

4 helical membrane passes run 10–30 (FAVALGAIGGSLSRYYLSLWF), 41–61 (GTLIINLSGCVVMGWFMTVAM), 72–89 (LLFGVGFLGSYTTFSTYE), and 105–125 (LVYWLGSCLFGALAMELGILL). Positions 80 and 83 each coordinate Na(+).

This sequence belongs to the fluoride channel Fluc/FEX (TC 1.A.43) family.

The protein localises to the cell inner membrane. It catalyses the reaction fluoride(in) = fluoride(out). Na(+) is not transported, but it plays an essential structural role and its presence is essential for fluoride channel function. In terms of biological role, fluoride-specific ion channel. Important for reducing fluoride concentration in the cell, thus reducing its toxicity. This Synechococcus sp. (strain JA-2-3B'a(2-13)) (Cyanobacteria bacterium Yellowstone B-Prime) protein is Fluoride-specific ion channel FluC.